We begin with the raw amino-acid sequence, 568 residues long: Proline--tRNA ligase (568 aa).

Belongs to the class-II aminoacyl-tRNA synthetase family. ProS type 1 subfamily. As to quaternary structure, homodimer.

It is found in the cytoplasm. The catalysed reaction is tRNA(Pro) + L-proline + ATP = L-prolyl-tRNA(Pro) + AMP + diphosphate. Catalyzes the attachment of proline to tRNA(Pro) in a two-step reaction: proline is first activated by ATP to form Pro-AMP and then transferred to the acceptor end of tRNA(Pro). As ProRS can inadvertently accommodate and process non-cognate amino acids such as alanine and cysteine, to avoid such errors it has two additional distinct editing activities against alanine. One activity is designated as 'pretransfer' editing and involves the tRNA(Pro)-independent hydrolysis of activated Ala-AMP. The other activity is designated 'posttransfer' editing and involves deacylation of mischarged Ala-tRNA(Pro). The misacylated Cys-tRNA(Pro) is not edited by ProRS. The protein is Proline--tRNA ligase of Campylobacter jejuni subsp. jejuni serotype O:6 (strain 81116 / NCTC 11828).